Consider the following 301-residue polypeptide: Ornithine carbamoyltransferase (301 aa).

Residues 47–50, glutamine 74, arginine 98, and 125–128 each bind carbamoyl phosphate; these read STRT and HPCQ. Residues asparagine 156, aspartate 220, and 224 to 225 each bind L-ornithine; that span reads SM. Residues 260–261 and arginine 288 each bind carbamoyl phosphate; that span reads CL.

Belongs to the aspartate/ornithine carbamoyltransferase superfamily. OTCase family.

It is found in the cytoplasm. The enzyme catalyses carbamoyl phosphate + L-ornithine = L-citrulline + phosphate + H(+). It functions in the pathway amino-acid biosynthesis; L-arginine biosynthesis; L-arginine from L-ornithine and carbamoyl phosphate: step 1/3. Its function is as follows. Reversibly catalyzes the transfer of the carbamoyl group from carbamoyl phosphate (CP) to the N(epsilon) atom of ornithine (ORN) to produce L-citrulline. This is Ornithine carbamoyltransferase from Methanobrevibacter smithii (strain ATCC 35061 / DSM 861 / OCM 144 / PS).